The sequence spans 517 residues: 2,3-bisphosphoglycerate-independent phosphoglycerate mutase (517 aa).

Mn(2+) is bound by residues Asp12 and Ser62. The active-site Phosphoserine intermediate is the Ser62. Residues His123, 153-154, Arg185, Arg191, 261-264, and Lys336 contribute to the substrate site; these read RD and RSDR. Positions 403, 407, 444, 445, and 463 each coordinate Mn(2+).

It belongs to the BPG-independent phosphoglycerate mutase family. Monomer. The cofactor is Mn(2+).

It catalyses the reaction (2R)-2-phosphoglycerate = (2R)-3-phosphoglycerate. Its pathway is carbohydrate degradation; glycolysis; pyruvate from D-glyceraldehyde 3-phosphate: step 3/5. Catalyzes the interconversion of 2-phosphoglycerate and 3-phosphoglycerate. This Methylobacillus flagellatus (strain ATCC 51484 / DSM 6875 / VKM B-1610 / KT) protein is 2,3-bisphosphoglycerate-independent phosphoglycerate mutase.